The following is a 654-amino-acid chain: DNA ligase (654 aa).

NAD(+) is bound by residues 32-36 and 81-82; these read DAVYD and SL. Lysine 112 acts as the N6-AMP-lysine intermediate in catalysis. Positions 133, 167, and 306 each coordinate NAD(+). Zn(2+)-binding residues include cysteine 400, cysteine 403, cysteine 416, and cysteine 421. The region spanning 577 to 654 is the BRCT domain; that stretch reads ESSSIFSHKT…EEELLKYLKE (78 aa).

The protein belongs to the NAD-dependent DNA ligase family. LigA subfamily. Mg(2+) serves as cofactor. It depends on Mn(2+) as a cofactor.

The catalysed reaction is NAD(+) + (deoxyribonucleotide)n-3'-hydroxyl + 5'-phospho-(deoxyribonucleotide)m = (deoxyribonucleotide)n+m + AMP + beta-nicotinamide D-nucleotide.. Its function is as follows. DNA ligase that catalyzes the formation of phosphodiester linkages between 5'-phosphoryl and 3'-hydroxyl groups in double-stranded DNA using NAD as a coenzyme and as the energy source for the reaction. It is essential for DNA replication and repair of damaged DNA. The sequence is that of DNA ligase from Helicobacter acinonychis (strain Sheeba).